We begin with the raw amino-acid sequence, 193 residues long: Peptidyl-tRNA hydrolase (193 aa).

H17 is a tRNA binding site. Residue H22 is the Proton acceptor of the active site. TRNA contacts are provided by F68, N70, and N116.

It belongs to the PTH family. As to quaternary structure, monomer.

Its subcellular location is the cytoplasm. It carries out the reaction an N-acyl-L-alpha-aminoacyl-tRNA + H2O = an N-acyl-L-amino acid + a tRNA + H(+). Functionally, hydrolyzes ribosome-free peptidyl-tRNAs (with 1 or more amino acids incorporated), which drop off the ribosome during protein synthesis, or as a result of ribosome stalling. Catalyzes the release of premature peptidyl moieties from peptidyl-tRNA molecules trapped in stalled 50S ribosomal subunits, and thus maintains levels of free tRNAs and 50S ribosomes. The protein is Peptidyl-tRNA hydrolase of Xanthomonas axonopodis pv. citri (strain 306).